The chain runs to 594 residues: Aspartate--tRNA(Asp/Asn) ligase (594 aa).

Glu-176 lines the L-aspartate pocket. Residues Gln-200–Lys-203 are aspartate. Arg-222 lines the L-aspartate pocket. Residues Arg-222–Glu-224 and Gln-231 each bind ATP. Residue His-450 participates in L-aspartate binding. Position 484 (Glu-484) interacts with ATP. Arg-491 is a binding site for L-aspartate. Residue Gly-536 to Arg-539 participates in ATP binding.

It belongs to the class-II aminoacyl-tRNA synthetase family. Type 1 subfamily. As to quaternary structure, homodimer.

It localises to the cytoplasm. It carries out the reaction tRNA(Asx) + L-aspartate + ATP = L-aspartyl-tRNA(Asx) + AMP + diphosphate. Functionally, aspartyl-tRNA synthetase with relaxed tRNA specificity since it is able to aspartylate not only its cognate tRNA(Asp) but also tRNA(Asn). Reaction proceeds in two steps: L-aspartate is first activated by ATP to form Asp-AMP and then transferred to the acceptor end of tRNA(Asp/Asn). In Geobacillus sp. (strain WCH70), this protein is Aspartate--tRNA(Asp/Asn) ligase.